Consider the following 528-residue polypeptide: DNA damage-binding protein cmr1 (528 aa).

Disordered regions lie at residues 32 to 98 (AQSS…QYEA) and 217 to 243 (DASQ…DPDP). Residues 52 to 62 (KPKKKPPPKKV) are compositionally biased toward basic residues. A WD 1 repeat occupies 185–226 (LTPERIYTMTFHPSEAKPLIFAGDKMGNLGVLDASQEKPTSA). Residues 230–242 (EDDEEDAEDDDPD) show a composition bias toward acidic residues. WD repeat units lie at residues 250-290 (PHTR…SVEK), 297-337 (SDDI…RSAV), 342-382 (LSEK…HDDP), 389-428 (VSRL…AAWE), 451-494 (GRWV…LAQL), and 497-528 (DGIT…CLWM).

The protein belongs to the WD repeat DDB2/WDR76 family.

Its function is as follows. DNA-binding protein that binds to both single- and double-stranded DNA. Binds preferentially to UV-damaged DNA. May be involved in DNA-metabolic processes. This Aspergillus fumigatus (strain CBS 144.89 / FGSC A1163 / CEA10) (Neosartorya fumigata) protein is DNA damage-binding protein cmr1.